Consider the following 159-residue polypeptide: Putative ribosomal RNA large subunit methyltransferase H (159 aa).

Residues L76, G108, and 127-132 each bind S-adenosyl-L-methionine; that span reads FSKMTF.

This sequence belongs to the RNA methyltransferase RlmH family.

The protein localises to the cytoplasm. It carries out the reaction pseudouridine(1915) in 23S rRNA + S-adenosyl-L-methionine = N(3)-methylpseudouridine(1915) in 23S rRNA + S-adenosyl-L-homocysteine + H(+). In terms of biological role, specifically methylates the pseudouridine at position 1915 (m3Psi1915) in 23S rRNA. The polypeptide is Putative ribosomal RNA large subunit methyltransferase H (Methanococcus maripaludis (strain C6 / ATCC BAA-1332)).